The sequence spans 327 residues: Thiamine-binding periplasmic protein (327 aa).

The N-terminal stretch at 1–18 (MLKKYLPLLLLCAAPAFA) is a signal peptide. Thiamine contacts are provided by residues 59–60 (DG), 161–162 (ST), Trp-197, and 215–218 (YTTS).

The protein belongs to the bacterial solute-binding protein 1 family. The complex is composed of two ATP-binding proteins (ThiQ), two transmembrane proteins (ThiP) and a solute-binding protein (ThiB).

The protein localises to the periplasm. In terms of biological role, part of the ABC transporter complex ThiBPQ involved in thiamine import. Is also involved in thiamine pyrophosphate transport. The polypeptide is Thiamine-binding periplasmic protein (Salmonella typhimurium (strain LT2 / SGSC1412 / ATCC 700720)).